Consider the following 868-residue polypeptide: Probable mixed-linked glucan synthase 3 (868 aa).

The segment at 36–68 is disordered; that stretch reads ERKAAGGGGGGAKGKHWAAADKGERRAAKECGG. Residues 53–68 are compositionally biased toward basic and acidic residues; that stretch reads AAADKGERRAAKECGG. A run of 2 helical transmembrane segments spans residues 86 to 106 and 116 to 136; these read LLHPYRALIFARLIAVLLFFG and IMWFWTMSVAGDVWFGFSWLL. Residue aspartate 211 is part of the active site. Substrate is bound by residues aspartate 412 and aspartate 414. Residue aspartate 573 is part of the active site. 6 consecutive transmembrane segments (helical) span residues 649–669, 686–706, 717–737, 771–791, 810–830, and 838–858; these read IYPVTSLFILLYAISPVMWLI, LLVIILMIHMIGWLEIKWAGI, FFMIGSTSAYPTAVLHMVVNL, MLIPTMVVLVANIGAIGVAIG, MGLLFNMWVMFLLYPFALAIM, and IILVVLLPIIFVIVALVYVAT.

This sequence belongs to the glycosyltransferase 2 family. Plant cellulose synthase-like F subfamily.

Its subcellular location is the golgi apparatus membrane. In terms of biological role, may catalyze both beta-1,3 and beta-1,4 glycosidic linkage on beta-D-glucan. Essential for (1,3;1,4)-beta-D-glucans synthesis in grasses and cereals (Poaceae). The mixed-linked glucans (which are not present in walls of dicotyledons or most other monocotyledonous plants) are particularly important constituents of the walls of the starchy endosperm and aleurone cells of cereal grains such as oats, wheat, rice and barley. They can account for up to 70% by weight of the wall. In Oryza sativa subsp. japonica (Rice), this protein is Probable mixed-linked glucan synthase 3 (CSLF3).